The sequence spans 40 residues: Photosystem II reaction center protein J (40 aa).

Position 2 is an N-acetylmethionine (Met-2). At 2-11 (MSEGGRIPLW) the chain is on the cytoplasmic side. A helical membrane pass occupies residues 12–26 (IVATVAGMGVIVIVG). The Lumenal segment spans residues 27-40 (LFFYGAYAGLGSSL).

This sequence belongs to the PsbJ family. PSII is composed of 1 copy each of membrane proteins PsbA, PsbB, PsbC, PsbD, PsbE, PsbF, PsbH, PsbI, PsbJ, PsbK, PsbL, PsbM, PsbT, PsbX, PsbY, PsbZ, Psb30/Ycf12, peripheral proteins PsbO, CyanoQ (PsbQ), PsbU, PsbV and a large number of cofactors. It forms dimeric complexes. PSII binds multiple chlorophylls, carotenoids and specific lipids. is required as a cofactor.

It is found in the cellular thylakoid membrane. Its function is as follows. One of the components of the core complex of photosystem II (PSII). PSII is a light-driven water:plastoquinone oxidoreductase that uses light energy to abstract electrons from H(2)O, generating O(2) and a proton gradient subsequently used for ATP formation. It consists of a core antenna complex that captures photons, and an electron transfer chain that converts photonic excitation into a charge separation. May play a regulatory role in PSII biogenesis. The chain is Photosystem II reaction center protein J from Thermosynechococcus vestitus (strain NIES-2133 / IAM M-273 / BP-1).